A 514-amino-acid polypeptide reads, in one-letter code: 2,3-bisphosphoglycerate-independent phosphoglycerate mutase (514 aa).

Residues Asp14 and Ser64 each coordinate Mn(2+). The active-site Phosphoserine intermediate is Ser64. Residues His125, 155 to 156 (RD), Arg187, Arg193, 263 to 266 (RADR), and Lys336 contribute to the substrate site. 5 residues coordinate Mn(2+): Asp403, His407, Asp444, His445, and His463.

It belongs to the BPG-independent phosphoglycerate mutase family. Monomer. Mn(2+) is required as a cofactor.

It carries out the reaction (2R)-2-phosphoglycerate = (2R)-3-phosphoglycerate. The protein operates within carbohydrate degradation; glycolysis; pyruvate from D-glyceraldehyde 3-phosphate: step 3/5. In terms of biological role, catalyzes the interconversion of 2-phosphoglycerate and 3-phosphoglycerate. In Shewanella baltica (strain OS185), this protein is 2,3-bisphosphoglycerate-independent phosphoglycerate mutase.